The following is a 229-amino-acid chain: Ribosomal RNA small subunit methyltransferase G (229 aa).

S-adenosyl-L-methionine contacts are provided by residues glycine 71, alanine 122–glutamate 123, and arginine 139.

It belongs to the methyltransferase superfamily. RNA methyltransferase RsmG family.

It is found in the cytoplasm. In terms of biological role, specifically methylates the N7 position of a guanine in 16S rRNA. This Thermotoga neapolitana (strain ATCC 49049 / DSM 4359 / NBRC 107923 / NS-E) protein is Ribosomal RNA small subunit methyltransferase G.